We begin with the raw amino-acid sequence, 208 residues long: MSTGGDFGNPLRKFKLVFLGEQSVGKTSLITRFMYDSFDNTYQATIGIDFLSKTMYLEDRTVRLQLWDTAGQERFRSLIPSYIRDSTVAVVVYDITNVNSFQQTTKWIDDVRTERGSDVIIMLVGNKTDLADKRQVSIEEGERKAKELNVMFIETSAKAGYNVKQLFRRVAAALPGMESTQDRSREDMIDIKLEKPQEQPVSEGGCSC.

Residue serine 2 is modified to N-acetylserine. GTP contacts are provided by serine 23, valine 24, glycine 25, lysine 26, threonine 27, serine 28, aspartate 39, asparagine 40, tyrosine 42, and threonine 45. Threonine 27 serves as a coordination point for Mg(2+). The Switch 1 signature appears at 32 to 50; sequence RFMYDSFDNTYQATIGIDF. Mg(2+) contacts are provided by threonine 45 and aspartate 68. Positions 69–88 match the Switch 2 motif; the sequence is TAGQERFRSLIPSYIRDSTV. Glycine 71 is a GTP binding site. Tyrosine 82 carries the O-AMP-tyrosine; by Legionella DrrA modification. GTP contacts are provided by asparagine 126, lysine 127, aspartate 129, serine 156, alanine 157, and lysine 158. A Phosphoserine modification is found at serine 184. 2 S-geranylgeranyl cysteine lipidation sites follow: cysteine 206 and cysteine 208. Cysteine 208 bears the Cysteine methyl ester mark.

This sequence belongs to the small GTPase superfamily. Rab family. Interacts (GTP-bound) with DYNLRB1; the interaction is direct. Interacts with BICD1. Interacts with BICD2; the interaction is direct. Interacts (GTP-bound) with VPS13B. In terms of assembly, interacts with BICD1. Interacts (GDP-bound) with DYNLRB1; the interaction is direct. Interacts (GTP-bound) with VPS13B. As to quaternary structure, interacts with BICDL1; leads to its accumulation in the pericentrosomal region. Interacts with SCYL1BP1. Interacts with VSP52. Interacts with RABGAP1. Interacts with GCC2 (via its GRIP domain). Interacts with RAB6IP1 (via its RUN 1 domain). Interacts with TMF1. Interacts with CIMAP3. Interacts (GTP-bound) with APBA1/MINT1 isoform 2, also called Mint1_826, but not with isoform 1. Interacts with RIC1; the interaction is direct with a preference for RAB6A-GDP. Interacts with RGP1; the interaction is direct with a preference for RAB6A-GDP. (Microbial infection) Interacts with human cytomegalovirus protein UL32. Mg(2+) is required as a cofactor. In terms of processing, prenylated. As to expression, ubiquitous.

It is found in the golgi apparatus membrane. It localises to the cytoplasmic vesicle. Its subcellular location is the secretory vesicle. The protein resides in the acrosome membrane. It catalyses the reaction GTP + H2O = GDP + phosphate + H(+). Regulated by guanine nucleotide exchange factors (GEFs) which promote the exchange of bound GDP for free GTP. Regulated by GTPase activating proteins (GAPs) which increase the GTP hydrolysis activity. Inhibited by GDP dissociation inhibitors (GDIs). In terms of biological role, the small GTPases Rab are key regulators of intracellular membrane trafficking, from the formation of transport vesicles to their fusion with membranes. Rabs cycle between an inactive GDP-bound form and an active GTP-bound form that is able to recruit to membranes different sets of downstream effectors directly responsible for vesicle formation, movement, tethering and fusion. RAB6A acts as a regulator of COPI-independent retrograde transport from the Golgi apparatus towards the endoplasmic reticulum (ER). Has a low GTPase activity. Recruits VPS13B to the Golgi membrane. Plays a role in neuron projection development. In Homo sapiens (Human), this protein is Ras-related protein Rab-6A.